The primary structure comprises 462 residues: Probable threonine/serine transporter YbxG (462 aa).

A run of 12 helical transmembrane segments spans residues 17 to 37, 38 to 58, 89 to 109, 121 to 141, 154 to 174, 190 to 210, 238 to 258, 276 to 296, 331 to 351, 355 to 375, 398 to 418, and 427 to 447; these read MIAL…STIS, WTGP…FFIM, ITAW…IIAV, PAWI…LISV, IKIV…FFGF, GGFF…VIAA, IIWR…TVYP, IGIT…AMSG, LYGT…NYIA, IFVY…FIIL, FAPF…VGMW, and LIVG…FGIG.

This sequence belongs to the amino acid-polyamine-organocation (APC) superfamily.

Its subcellular location is the cell membrane. Its function is as follows. Probable threonine transporter. Is also active as a minor serine permease. This Bacillus subtilis (strain 168) protein is Probable threonine/serine transporter YbxG (ybxG).